We begin with the raw amino-acid sequence, 174 residues long: uncharacterized protein (174 aa).

A helical transmembrane segment spans residues 7-27 (LIILAIFTLWVGGFGYYLYLI).

It is found in the membrane. This is an uncharacterized protein from Rickettsia prowazekii (strain Madrid E).